A 198-amino-acid chain; its full sequence is Ribonuclease HII (198 aa).

Positions 14–198 (GVIAGVDEVG…RNFAPISRAL (185 aa)) constitute an RNase H type-2 domain. A divalent metal cation-binding residues include aspartate 20, glutamate 21, and aspartate 112.

The protein belongs to the RNase HII family. The cofactor is Mn(2+). Requires Mg(2+) as cofactor.

It is found in the cytoplasm. The catalysed reaction is Endonucleolytic cleavage to 5'-phosphomonoester.. Its function is as follows. Endonuclease that specifically degrades the RNA of RNA-DNA hybrids. This is Ribonuclease HII from Wolbachia sp. subsp. Drosophila simulans (strain wRi).